The sequence spans 358 residues: 3-dehydroquinate synthase (358 aa).

NAD(+) is bound by residues 70-75 (DGEKFK), 104-108 (GVVGD), 128-129 (TT), K141, K150, and 168-171 (CLQT). Positions 183, 246, and 263 each coordinate Zn(2+).

Belongs to the sugar phosphate cyclases superfamily. Dehydroquinate synthase family. Requires Co(2+) as cofactor. Zn(2+) is required as a cofactor. It depends on NAD(+) as a cofactor.

The protein localises to the cytoplasm. The enzyme catalyses 7-phospho-2-dehydro-3-deoxy-D-arabino-heptonate = 3-dehydroquinate + phosphate. The protein operates within metabolic intermediate biosynthesis; chorismate biosynthesis; chorismate from D-erythrose 4-phosphate and phosphoenolpyruvate: step 2/7. In terms of biological role, catalyzes the conversion of 3-deoxy-D-arabino-heptulosonate 7-phosphate (DAHP) to dehydroquinate (DHQ). This is 3-dehydroquinate synthase from Shewanella frigidimarina (strain NCIMB 400).